The following is a 304-amino-acid chain: Neurexophilin-4 (304 aa).

The N-terminal stretch at 1 to 23 is a signal peptide; the sequence is MRLLPEWLLLLFGPWLLRKVISG. The segment at 24 to 84 is II; the sequence is QIVESGRPQY…GALARPGAAG (61 aa). 4 N-linked (GlcNAc...) asparagine glycosylation sites follow: asparagine 72, asparagine 133, asparagine 143, and asparagine 149. An III region spans residues 85 to 163; sequence GPPVPRTKRK…IVPPSKRVEF (79 aa). The segment at 164–220 is IV (linker domain); sequence GGVWLPGPAPHPLQSTLALEGVLPGLGPPLGMAGQGLGGNLGGALAGPLGGALGVPG. The segment at 221–304 is v (Cys-rich); sequence AKESRAFNCH…NFQSEHPYFG (84 aa).

This sequence belongs to the neurexophilin family. May be proteolytically processed in neuron-like cells. As to expression, brain and kidney.

The protein resides in the secreted. In terms of biological role, may be signaling molecules that resemble neuropeptides and that act by binding to alpha-neurexins and possibly other receptors. This Rattus norvegicus (Rat) protein is Neurexophilin-4 (Nxph4).